The primary structure comprises 505 residues: Chromosomal replication initiator protein DnaA (505 aa).

A domain I, interacts with DnaA modulators region spans residues 1-90; that stretch reads MSVELWQQCV…RRSSAPRAAP (90 aa). Residues 91 to 168 form a domain II region; the sequence is NAPVSAAVAA…QVEGALKHTS (78 aa). The interval 169 to 385 is domain III, AAA+ region; sequence YLNRTFTFDT…GALKRVIAHS (217 aa). Residues G213, G215, K216, and T217 each coordinate ATP. The tract at residues 386–505 is domain IV, binds dsDNA; sequence HFMGRDITIE…YKNLLRTLTT (120 aa).

This sequence belongs to the DnaA family. As to quaternary structure, oligomerizes as a right-handed, spiral filament on DNA at oriC.

It localises to the cytoplasm. Plays an essential role in the initiation and regulation of chromosomal replication. ATP-DnaA binds to the origin of replication (oriC) to initiate formation of the DNA replication initiation complex once per cell cycle. Binds the DnaA box (a 9 base pair repeat at the origin) and separates the double-stranded (ds)DNA. Forms a right-handed helical filament on oriC DNA; dsDNA binds to the exterior of the filament while single-stranded (ss)DNA is stabiized in the filament's interior. The ATP-DnaA-oriC complex binds and stabilizes one strand of the AT-rich DNA unwinding element (DUE), permitting loading of DNA polymerase. After initiation quickly degrades to an ADP-DnaA complex that is not apt for DNA replication. Binds acidic phospholipids. In Pseudomonas putida (strain ATCC 700007 / DSM 6899 / JCM 31910 / BCRC 17059 / LMG 24140 / F1), this protein is Chromosomal replication initiator protein DnaA.